A 548-amino-acid polypeptide reads, in one-letter code: Splicing factor U2af large subunit B (548 aa).

Basic and acidic residues predominate over residues 1 to 82 (MADDHAAAAD…DRDRDRDKDR (82 aa)). The segment at 1–156 (MADDHAAAAD…SKRVSGFDMA (156 aa)) is disordered. Residues 83–93 (DRHHRHHRERR) show a composition bias toward basic residues. The span at 94–120 (EHRDRSDDHDRHRSRDSERRRDHERDG) shows a compositional bias: basic and acidic residues. Residues 121-149 (RRRHRSRSRSRSRGRDRRSRSRSRSKSKR) show a composition bias toward basic residues. 3 RRM domains span residues 214–297 (RRVY…RPTD), 334–412 (DRIF…RANQ), and 453–539 (QVVS…YPEN).

Belongs to the splicing factor SR family.

Its subcellular location is the nucleus. In terms of biological role, necessary for the splicing of pre-mRNA. The protein is Splicing factor U2af large subunit B (U2AF65B) of Oryza sativa subsp. japonica (Rice).